The following is an 809-amino-acid chain: Trimethylamine-N-oxide reductase 2 (809 aa).

A signal peptide (tat-type signal) is located at residues 1–31 (MTLTRREFIKHSGIAAGTLVVTSAAPLPAWA). Serine 176 lines the Mo-bis(molybdopterin guanine dinucleotide) pocket.

Belongs to the prokaryotic molybdopterin-containing oxidoreductase family. Requires Mo-bis(molybdopterin guanine dinucleotide) as cofactor. Predicted to be exported by the Tat system. The position of the signal peptide cleavage has not been experimentally proven.

It is found in the periplasm. The catalysed reaction is trimethylamine + 2 Fe(III)-[cytochrome c] + H2O = trimethylamine N-oxide + 2 Fe(II)-[cytochrome c] + 3 H(+). Reduces trimethylamine-N-oxide (TMAO) into trimethylamine; an anaerobic reaction coupled to energy-yielding reactions. Can also reduce other N- and S-oxide compounds such as 4-methylmorpholine-N-oxide and biotin sulfoxide (BSO), but with a lower catalytic efficiency. The protein is Trimethylamine-N-oxide reductase 2 (torZ) of Escherichia coli O6:H1 (strain CFT073 / ATCC 700928 / UPEC).